A 185-amino-acid chain; its full sequence is Cell wall protein phiA (185 aa).

The first 18 residues, 1–18, serve as a signal peptide directing secretion; sequence MQIKSFVLAASAAATASA. Asparagine 60 carries N-linked (GlcNAc...) asparagine glycosylation.

The protein belongs to the phiA family.

It localises to the secreted. Its subcellular location is the cell wall. Functionally, cell wall protein involved in development of asexual structures such as phialide and conidium development, and thus required for spore formation. Plays a role as a general stress protectant produced by the fungus in competition with antagonistic bacteria. This is Cell wall protein phiA from Aspergillus fumigatus (strain CBS 144.89 / FGSC A1163 / CEA10) (Neosartorya fumigata).